Here is a 168-residue protein sequence, read N- to C-terminus: uncharacterized protein (168 aa).

A PfpI endopeptidase domain is found at 1 to 166; it reads MRVLILAENE…FCGELIKILK (166 aa).

It belongs to the peptidase C56 family.

This is an uncharacterized protein from Archaeoglobus fulgidus (strain ATCC 49558 / DSM 4304 / JCM 9628 / NBRC 100126 / VC-16).